Reading from the N-terminus, the 326-residue chain is Protein phosphatase PTC7 homolog fig (326 aa).

Positions 40–83 are disordered; that stretch reads VQGKSKPRSPHLTSPQCSPEHRPRRFRPPSASGRTAFSSAPRPK. In terms of domain architecture, PPM-type phosphatase spans 64–314; it reads RFRPPSASGR…DDITVVLASV (251 aa). Mn(2+) contacts are provided by aspartate 91, glycine 92, and aspartate 236.

The protein belongs to the PP2C family. Requires Mg(2+) as cofactor. The cofactor is Mn(2+).

It catalyses the reaction O-phospho-L-seryl-[protein] + H2O = L-seryl-[protein] + phosphate. The catalysed reaction is O-phospho-L-threonyl-[protein] + H2O = L-threonyl-[protein] + phosphate. This is Protein phosphatase PTC7 homolog fig from Drosophila persimilis (Fruit fly).